A 272-amino-acid polypeptide reads, in one-letter code: Shikimate dehydrogenase (NADP(+)) (272 aa).

Shikimate-binding positions include 14–16 (SKS) and Thr-61. Lys-65 serves as the catalytic Proton acceptor. Residue Glu-77 participates in NADP(+) binding. Shikimate is bound by residues Asn-86 and Asp-102. NADP(+) is bound by residues 126–130 (GAGGA), 149–154 (NRTASR), and Met-213. Tyr-215 contributes to the shikimate binding site. Gly-237 contributes to the NADP(+) binding site.

The protein belongs to the shikimate dehydrogenase family. As to quaternary structure, homodimer.

The catalysed reaction is shikimate + NADP(+) = 3-dehydroshikimate + NADPH + H(+). It participates in metabolic intermediate biosynthesis; chorismate biosynthesis; chorismate from D-erythrose 4-phosphate and phosphoenolpyruvate: step 4/7. Involved in the biosynthesis of the chorismate, which leads to the biosynthesis of aromatic amino acids. Catalyzes the reversible NADPH linked reduction of 3-dehydroshikimate (DHSA) to yield shikimate (SA). This is Shikimate dehydrogenase (NADP(+)) from Citrobacter koseri (strain ATCC BAA-895 / CDC 4225-83 / SGSC4696).